We begin with the raw amino-acid sequence, 187 residues long: Adenylate kinase (187 aa).

10-15 (GSGKGT) is an ATP binding site. The interval 30–59 (STGDLLRAEVAAGSPLGLKAKEVMARGDLV) is NMP. Residues Thr31, Arg36, 57-59 (DLV), 85-88 (GYPR), and Gln92 contribute to the AMP site. Residues 126 to 136 (GRAKAEGREDD) are LID. Arg127 contributes to the ATP binding site. The AMP site is built by Arg133 and Arg144. Residue Gly172 participates in ATP binding.

Belongs to the adenylate kinase family. In terms of assembly, monomer.

It localises to the cytoplasm. It carries out the reaction AMP + ATP = 2 ADP. It functions in the pathway purine metabolism; AMP biosynthesis via salvage pathway; AMP from ADP: step 1/1. Catalyzes the reversible transfer of the terminal phosphate group between ATP and AMP. Plays an important role in cellular energy homeostasis and in adenine nucleotide metabolism. This Xanthomonas axonopodis pv. citri (strain 306) protein is Adenylate kinase.